The sequence spans 177 residues: Small ribosomal subunit protein eS10z (177 aa).

Positions 90–177 (TLKKSAKPGG…AAAPSGSGFP (88 aa)) are disordered. The span at 108–140 (DRQRGPPRSDGDRPRFGDRDGYRGGPRGGDEKG) shows a compositional bias: basic and acidic residues. Residues 141 to 150 (GAPADFQPSF) show a composition bias toward low complexity. Gly residues predominate over residues 151–165 (QGGGGRPGFGRGAGG). Residues 166–177 (YSAAAPSGSGFP) are compositionally biased toward low complexity.

Belongs to the eukaryotic ribosomal protein eS10 family.

The protein resides in the cytoplasm. This is Small ribosomal subunit protein eS10z (RPS10A) from Arabidopsis thaliana (Mouse-ear cress).